An 86-amino-acid polypeptide reads, in one-letter code: MIOREX complex component 7 (86 aa).

In terms of assembly, associates with the mitochondrial ribosome.

Its subcellular location is the mitochondrion. In terms of biological role, component of MIOREX complexes, large expressome-like assemblies of ribosomes with factors involved in all the steps of post-transcriptional gene expression. The sequence is that of MIOREX complex component 7 from Saccharomyces cerevisiae (strain ATCC 204508 / S288c) (Baker's yeast).